The sequence spans 323 residues: Movement protein (323 aa).

A coiled-coil region spans residues 292–322; sequence SLLENKDENLLRSMSTKIDTLGKKLSLIYDN.

The protein belongs to the caulimoviridae movement protein family. In terms of assembly, homotrimer, through the coiled-coil domain. Interacts with VAP.

The protein resides in the host cell junction. It localises to the host plasmodesma. Transports viral genome to neighboring plant cells directly through plasmosdesmata, without any budding. The movement protein allows efficient cell to cell propagation, by bypassing the host cell wall barrier. Acts by forming tubules structures that increase the size exclusion limit (SEL) of plasmodesmata, thereby allowing viral ribonucleocapsids to spread directly to neighboring cells. This is Movement protein from Figwort mosaic virus (strain DxS) (FMV).